We begin with the raw amino-acid sequence, 486 residues long: Siroheme synthase (486 aa).

The tract at residues 1–204 is precorrin-2 dehydrogenase /sirohydrochlorin ferrochelatase; that stretch reads MNYLPIFVDL…HQIEQAEALV (204 aa). Residues 22 to 23 and 43 to 44 each bind NAD(+); these read HV and EK. The residue at position 128 (S128) is a Phosphoserine. Residues 216–486 form a uroporphyrinogen-III C-methyltransferase region; that stretch reads GEVSLVGAGP…NKETHWKQAA (271 aa). P225 lines the S-adenosyl-L-methionine pocket. The active-site Proton acceptor is the D248. K270 (proton donor) is an active-site residue. Residues 301–303, V306, 331–332, M383, and G412 contribute to the S-adenosyl-L-methionine site; these read GGD and TA.

The protein in the N-terminal section; belongs to the precorrin-2 dehydrogenase / sirohydrochlorin ferrochelatase family. It in the C-terminal section; belongs to the precorrin methyltransferase family.

It catalyses the reaction uroporphyrinogen III + 2 S-adenosyl-L-methionine = precorrin-2 + 2 S-adenosyl-L-homocysteine + H(+). The catalysed reaction is precorrin-2 + NAD(+) = sirohydrochlorin + NADH + 2 H(+). It carries out the reaction siroheme + 2 H(+) = sirohydrochlorin + Fe(2+). The protein operates within cofactor biosynthesis; adenosylcobalamin biosynthesis; precorrin-2 from uroporphyrinogen III: step 1/1. It functions in the pathway cofactor biosynthesis; adenosylcobalamin biosynthesis; sirohydrochlorin from precorrin-2: step 1/1. It participates in porphyrin-containing compound metabolism; siroheme biosynthesis; precorrin-2 from uroporphyrinogen III: step 1/1. Its pathway is porphyrin-containing compound metabolism; siroheme biosynthesis; siroheme from sirohydrochlorin: step 1/1. The protein operates within porphyrin-containing compound metabolism; siroheme biosynthesis; sirohydrochlorin from precorrin-2: step 1/1. Its function is as follows. Multifunctional enzyme that catalyzes the SAM-dependent methylations of uroporphyrinogen III at position C-2 and C-7 to form precorrin-2 via precorrin-1. Then it catalyzes the NAD-dependent ring dehydrogenation of precorrin-2 to yield sirohydrochlorin. Finally, it catalyzes the ferrochelation of sirohydrochlorin to yield siroheme. This chain is Siroheme synthase, found in Actinobacillus pleuropneumoniae serotype 7 (strain AP76).